We begin with the raw amino-acid sequence, 2774 residues long: Teneurin-2 (2774 aa).

The Teneurin N-terminal domain maps to 1–375 (MDVKDRRHRS…KPSKYCSWKC (375 aa)). At 1–379 (MDVKDRRHRS…YCSWKCAALS (379 aa)) the chain is on the cytoplasmic side. Phosphoserine is present on residues Ser-90 and Ser-124. A disordered region spans residues 111–271 (TGSDADSDTE…HHHSSANSLN (161 aa)). The span at 141–155 (SSGLSSRENSALTLT) shows a compositional bias: polar residues. At Thr-155 the chain carries Phosphothreonine. The residue at position 157 (Ser-157) is a Phosphoserine. Over residues 159-168 (NENKSDDENG) the composition is skewed to basic and acidic residues. A compositionally biased stretch (low complexity) spans 176-188 (SPSLLPSAQLPSS). Residues 202-211 (DSNTSHQIMD) show a composition bias toward polar residues. Positions 229–240 (SGPQQASSSGPP) are enriched in low complexity. The chain crosses the membrane as a helical span at residues 380–400 (AIAAALLLAILLAYFIAMHLL). Residues 401 to 2774 (GLNWQLQPAD…FLRQNEMGKR (2374 aa)) are Extracellular-facing. N-linked (GlcNAc...) asparagine glycosylation is found at Asn-443 and Asn-482. EGF-like domains are found at residues 575-603 (DCPR…ADCA), 598-634 (LGAD…AECD), 636-668 (PMNQ…EHCE), 669-701 (EVDC…NCEL), 702-735 (ARVQ…PDCS), 738-766 (VCSV…AACD), 769-797 (VCHP…EHCT), and 808-841 (DGCP…PGCN). 22 disulfide bridges follow: Cys-576–Cys-586, Cys-580–Cys-591, Cys-593–Cys-602, Cys-611–Cys-622, Cys-624–Cys-633, Cys-640–Cys-651, Cys-645–Cys-656, Cys-658–Cys-667, Cys-672–Cys-683, Cys-677–Cys-688, Cys-690–Cys-699, Cys-710–Cys-723, Cys-725–Cys-734, Cys-739–Cys-749, Cys-743–Cys-754, Cys-756–Cys-765, Cys-770–Cys-780, Cys-774–Cys-785, Cys-787–Cys-796, Cys-810–Cys-820, Cys-814–Cys-829, and Cys-831–Cys-840. N-linked (GlcNAc...) asparagine glycans are attached at residues Asn-925, Asn-948, and Asn-1267. 5 NHL repeats span residues 1272 to 1316 (LELR…VKSL), 1342 to 1386 (ARCG…NGII), 1401 to 1452 (LSCD…IAGR), 1474 to 1501 (LESA…INRL), and 1530 to 1573 (CYSG…VSKN). A YD 1 repeat occupies 1583–1602 (YEAASPGEQELYVFNADGIH). Asn-1616 is a glycosylation site (N-linked (GlcNAc...) asparagine). YD repeat units lie at residues 1619-1639 (YSTD…LKIR), 1682-1701 (YDGN…WTTF), and 1702-1724 (YDYD…TSLH). N-linked (GlcNAc...) asparagine glycosylation is found at Asn-1712, Asn-1749, Asn-1773, Asn-1807, and Asn-1892. 18 YD repeats span residues 1895 to 1914 (YFFN…ERTD), 1936 to 1954 (YLDK…YIFE), 1955 to 1975 (YDSS…HSMS), 1982 to 1999 (YIRN…VIFD), 2000 to 2021 (YSDD…VFYK), 2022 to 2039 (YGKL…TAVT), 2042 to 2062 (YDET…FSCT), 2065 to 2085 (YRKI…EGMV), 2093 to 2113 (YHDN…TPLP), 2119 to 2136 (YDEI…GVIY), 2137 to 2163 (YDIN…IKEV), 2165 to 2178 (YEMF…MTVQ), 2179 to 2202 (YDSM…TKYT), 2205 to 2225 (YDGD…WRYS), 2226 to 2246 (YDLN…LMPL), 2248 to 2268 (YDLR…DDDG), 2280 to 2300 (YNSK…SVQY), and 2302 to 2322 (YDGV…LQYF). The N-linked (GlcNAc...) asparagine glycan is linked to Asn-1993. The N-linked (GlcNAc...) asparagine glycan is linked to Asn-2197. N-linked (GlcNAc...) asparagine glycosylation is present at Asn-2337. Residues 2348-2389 (YDLQGHLFAMESSSGEEYYVASDNTGTPLAVFSINGLMIKQL) form a YD 23 repeat. The N-linked (GlcNAc...) asparagine glycan is linked to Asn-2648.

It belongs to the tenascin family. Teneurin subfamily. In terms of assembly, homodimer; disulfide-linked. Heterodimer with either TENM1 or TENM3. May also form heterodimer with TENM4. Isoform 2 (C-terminal globular domain) interacts with ADGRL1 isoform 2. In terms of processing, derives from the membrane form by proteolytic processing. Derives from the plasma membrane form by proteolytic cleavage and translocates to the nucleus. Homophilic binding of the C-terminal extracellular domain stimulates its proteolytic cleavage and release in the cytoplasmic. Is subjected to rapid degradation by the proteasome pathway. As to expression, highly expressed in heart, followed by brain, liver, kidney and fetal brain and weakly expressed in lung and testis. No expression was detected in skeletal muscle, pancreas, spleen, ovary and fetal liver.

It is found in the cell membrane. It localises to the presynaptic cell membrane. The protein localises to the postsynaptic cell membrane. The protein resides in the endoplasmic reticulum. Its subcellular location is the golgi apparatus. It is found in the synapse. It localises to the cell projection. The protein localises to the dendritic spine. The protein resides in the filopodium. Its subcellular location is the growth cone. It is found in the nucleus. It localises to the PML body. Its function is as follows. Involved in neural development, regulating the establishment of proper connectivity within the nervous system. Acts as a ligand of the ADGRL1 and ADGRL3 receptors that are expressed at the surface of adjacent cells. Promotes the formation of filopodia and enlarged growth cone in neuronal cells. Mediates axon guidance and homophilic and heterophilic cell-cell adhesion. May function as a cellular signal transducer. Acts as a ligand of the ADGRL1 receptor. Mediates axon guidance and heterophilic cell-cell adhesion. Functionally, induces gene transcription inhibition. The polypeptide is Teneurin-2 (TENM2) (Homo sapiens (Human)).